The sequence spans 86 residues: UPF0297 protein SERP1181 (86 aa).

It belongs to the UPF0297 family.

The polypeptide is UPF0297 protein SERP1181 (Staphylococcus epidermidis (strain ATCC 35984 / DSM 28319 / BCRC 17069 / CCUG 31568 / BM 3577 / RP62A)).